Reading from the N-terminus, the 71-residue chain is Large ribosomal subunit protein uL30 (71 aa).

The protein belongs to the universal ribosomal protein uL30 family. As to quaternary structure, part of the 50S ribosomal subunit.

In Mycobacterium leprae (strain TN), this protein is Large ribosomal subunit protein uL30.